A 481-amino-acid chain; its full sequence is tRNA sulfurtransferase (481 aa).

The THUMP domain occupies 54–156 (ADGDGPLRHI…GKDVFFYHEI (103 aa)). ATP-binding positions include 174–175 (LV), lysine 256, glycine 278, and glutamine 287. Cysteine 334 and cysteine 433 are joined by a disulfide. A Rhodanese domain is found at 388 to 463 (IPKDAVIIDL…YYSTFSDLKK (76 aa)). The active-site Cysteine persulfide intermediate is cysteine 433.

Belongs to the ThiI family.

It localises to the cytoplasm. The catalysed reaction is [ThiI sulfur-carrier protein]-S-sulfanyl-L-cysteine + a uridine in tRNA + 2 reduced [2Fe-2S]-[ferredoxin] + ATP + H(+) = [ThiI sulfur-carrier protein]-L-cysteine + a 4-thiouridine in tRNA + 2 oxidized [2Fe-2S]-[ferredoxin] + AMP + diphosphate. It catalyses the reaction [ThiS sulfur-carrier protein]-C-terminal Gly-Gly-AMP + S-sulfanyl-L-cysteinyl-[cysteine desulfurase] + AH2 = [ThiS sulfur-carrier protein]-C-terminal-Gly-aminoethanethioate + L-cysteinyl-[cysteine desulfurase] + A + AMP + 2 H(+). It functions in the pathway cofactor biosynthesis; thiamine diphosphate biosynthesis. Catalyzes the ATP-dependent transfer of a sulfur to tRNA to produce 4-thiouridine in position 8 of tRNAs, which functions as a near-UV photosensor. Also catalyzes the transfer of sulfur to the sulfur carrier protein ThiS, forming ThiS-thiocarboxylate. This is a step in the synthesis of thiazole, in the thiamine biosynthesis pathway. The sulfur is donated as persulfide by IscS. The protein is tRNA sulfurtransferase of Thermoplasma acidophilum (strain ATCC 25905 / DSM 1728 / JCM 9062 / NBRC 15155 / AMRC-C165).